The chain runs to 358 residues: Tribbles homolog 3 (358 aa).

Residues 1–54 (MRATPLAAPAGSLSRKKRLELDDNLDTERPVQKRARSGPQPRLPPCLLPLSPPT) form a disordered region. Residues 1–127 (MRATPLAAPA…KHVARPTEVL (127 aa)) form an interaction with DDIT3/CHOP region. Ser12 is subject to Phosphoserine. Residues 41–54 (PRLPPCLLPLSPPT) are compositionally biased toward pro residues. The Protein kinase domain occupies 68-316 (LGPYVLLEPE…TGILLHPWLR (249 aa)).

It belongs to the protein kinase superfamily. CAMK Ser/Thr protein kinase family. Tribbles subfamily. In terms of assembly, interacts with AKT1, AKT2, MAP2K1 and MAP2K7. Interacts with ATF4. Interacts with DDIT3/CHOP and inhibits its interaction with EP300/P300. Interacts with APOBEC3C. Interacts (via N-terminus) with APOBEC3A. Interacts with RELA. Highest expression in liver, pancreas, peripheral blood leukocytes and bone marrow. Also highly expressed in a number of primary lung, colon and breast tumors. Expressed in spleen, thymus, and prostate and is undetectable in other examined tissues, including testis, ovary, small intestine, colon, leukocyte, heart, brain, placenta, lung, skeletal muscle, and kidney.

It localises to the nucleus. Inactive protein kinase which acts as a regulator of the integrated stress response (ISR), a process for adaptation to various stress. Inhibits the transcriptional activity of DDIT3/CHOP and is involved in DDIT3/CHOP-dependent cell death during ER stress. May play a role in programmed neuronal cell death but does not appear to affect non-neuronal cells. Acts as a negative feedback regulator of the ATF4-dependent transcription during the ISR: while TRIB3 expression is promoted by ATF4, TRIB3 protein interacts with ATF4 and inhibits ATF4 transcription activity. Disrupts insulin signaling by binding directly to Akt kinases and blocking their activation. May bind directly to and mask the 'Thr-308' phosphorylation site in AKT1. Interacts with the NF-kappa-B transactivator p65 RELA and inhibits its phosphorylation and thus its transcriptional activation activity. Interacts with MAPK kinases and regulates activation of MAP kinases. Can inhibit APOBEC3A editing of nuclear DNA. This is Tribbles homolog 3 (TRIB3) from Homo sapiens (Human).